We begin with the raw amino-acid sequence, 336 residues long: uncharacterized protein (336 aa).

NADP(+) contacts are provided by lysine 39 and tyrosine 166.

This sequence belongs to the NAD(P)-dependent epimerase/dehydratase family. Dihydroflavonol-4-reductase subfamily.

The protein localises to the cytoplasm. It is found in the nucleus. This is an uncharacterized protein from Schizosaccharomyces pombe (strain 972 / ATCC 24843) (Fission yeast).